The sequence spans 806 residues: Hyperosmolality-gated Ca2+ permeable channel 1.8 (806 aa).

A run of 10 helical transmembrane segments spans residues 7-27 (IGVS…AFAV), 102-122 (IYTL…VVLV), 157-177 (KFFF…FMLY), 375-395 (LVIG…IAFV), 427-447 (FLPG…LLIM), 467-487 (YYYF…TAFE), 512-532 (ATFF…GEIL), 576-596 (FLLG…ILIF), 626-646 (VHGR…GLLA), and 650-670 (AADS…FHKY). The tract at residues 726–786 (SSSSSSEKET…HYASAYEQSS (61 aa)) is disordered. The span at 731–750 (SEKETHQEETPEVRVDKHET) shows a compositional bias: basic and acidic residues. Thr735 is modified (phosphothreonine). Residues 751-762 (QSSSPVTELGTS) are compositionally biased toward polar residues. Over residues 775 to 786 (SSHYASAYEQSS) the composition is skewed to low complexity.

This sequence belongs to the CSC1 (TC 1.A.17) family.

Its subcellular location is the golgi apparatus membrane. It localises to the cell membrane. Acts as an osmosensitive calcium-permeable cation channel. The polypeptide is Hyperosmolality-gated Ca2+ permeable channel 1.8 (Arabidopsis thaliana (Mouse-ear cress)).